The primary structure comprises 346 residues: Histidinol-phosphate aminotransferase (346 aa).

Position 209 is an N6-(pyridoxal phosphate)lysine (lysine 209).

Belongs to the class-II pyridoxal-phosphate-dependent aminotransferase family. Histidinol-phosphate aminotransferase subfamily. As to quaternary structure, homodimer. Requires pyridoxal 5'-phosphate as cofactor.

The catalysed reaction is L-histidinol phosphate + 2-oxoglutarate = 3-(imidazol-4-yl)-2-oxopropyl phosphate + L-glutamate. Its pathway is amino-acid biosynthesis; L-histidine biosynthesis; L-histidine from 5-phospho-alpha-D-ribose 1-diphosphate: step 7/9. This Aliivibrio fischeri (strain MJ11) (Vibrio fischeri) protein is Histidinol-phosphate aminotransferase.